The following is a 493-amino-acid chain: Ribulose bisphosphate carboxylase large chain (493 aa).

Substrate is bound at residue Asn132. An S-nitrosocysteine modification is found at Cys181. Position 182 (Thr182) interacts with substrate. The active-site Proton acceptor is the Lys184. Residue Lys186 participates in substrate binding. Lys210, Asp212, and Glu213 together coordinate Mg(2+). N6-carboxylysine is present on Lys210. Catalysis depends on His302, which acts as the Proton acceptor. 3 residues coordinate substrate: Arg303, His335, and Ser387. Cys460 carries the post-translational modification S-nitrosocysteine.

The protein belongs to the RuBisCO large chain family. Type I subfamily. Heterohexadecamer of 8 large chains and 8 small chains. It depends on Mg(2+) as a cofactor.

It is found in the plastid. The protein localises to the chloroplast. The catalysed reaction is 2 (2R)-3-phosphoglycerate + 2 H(+) = D-ribulose 1,5-bisphosphate + CO2 + H2O. It catalyses the reaction D-ribulose 1,5-bisphosphate + O2 = 2-phosphoglycolate + (2R)-3-phosphoglycerate + 2 H(+). Functionally, ruBisCO catalyzes two reactions: the carboxylation of D-ribulose 1,5-bisphosphate, the primary event in carbon dioxide fixation, as well as the oxidative fragmentation of the pentose substrate in the photorespiration process. Both reactions occur simultaneously and in competition at the same active site. Carbon dioxide and oxygen bind in the same pocket of the enzyme in a similar manner. In Galdieria sulphuraria (Red alga), this protein is Ribulose bisphosphate carboxylase large chain.